The chain runs to 601 residues: Glutamine--fructose-6-phosphate aminotransferase [isomerizing] (601 aa).

C2 acts as the Nucleophile; for GATase activity in catalysis. Positions 2-216 (CGIVGYIGTN…DKEIVIVTKD (215 aa)) constitute a Glutamine amidotransferase type-2 domain. SIS domains follow at residues 282–421 (ILDE…EIGD) and 453–591 (IAGE…VDKP). Residue K596 is the For Fru-6P isomerization activity of the active site.

Homodimer.

It localises to the cytoplasm. The enzyme catalyses D-fructose 6-phosphate + L-glutamine = D-glucosamine 6-phosphate + L-glutamate. Catalyzes the first step in hexosamine metabolism, converting fructose-6P into glucosamine-6P using glutamine as a nitrogen source. The polypeptide is Glutamine--fructose-6-phosphate aminotransferase [isomerizing] (Listeria innocua serovar 6a (strain ATCC BAA-680 / CLIP 11262)).